The chain runs to 65 residues: Large ribosomal subunit protein bL35 (65 aa).

The protein belongs to the bacterial ribosomal protein bL35 family.

This is Large ribosomal subunit protein bL35 from Phytoplasma mali (strain AT).